The primary structure comprises 231 residues: Protein OPG061 (231 aa).

It belongs to the orthopoxvirus OPG058 family.

The protein resides in the host nucleus. Its subcellular location is the host nucleolus. This Cynomys gunnisoni (Gunnison's prairie dog) protein is Protein OPG061 (OPG061).